The primary structure comprises 578 residues: Potassium-transporting ATPase potassium-binding subunit (578 aa).

10 helical membrane-spanning segments follow: residues Asn-3–Gly-23, Ser-65–Leu-85, Gly-134–Ile-154, Ile-175–Gly-195, Phe-261–Phe-281, Ala-293–Glu-313, Gly-397–Gly-417, Ala-435–Ile-455, Ile-503–Gly-523, and Leu-543–Pro-563.

The protein belongs to the KdpA family. In terms of assembly, the system is composed of three essential subunits: KdpA, KdpB and KdpC.

The protein resides in the cell membrane. In terms of biological role, part of the high-affinity ATP-driven potassium transport (or Kdp) system, which catalyzes the hydrolysis of ATP coupled with the electrogenic transport of potassium into the cytoplasm. This subunit binds the extracellular potassium ions and delivers the ions to the membrane domain of KdpB through an intramembrane tunnel. This chain is Potassium-transporting ATPase potassium-binding subunit, found in Clostridium perfringens (strain ATCC 13124 / DSM 756 / JCM 1290 / NCIMB 6125 / NCTC 8237 / Type A).